The chain runs to 257 residues: NAD-capped RNA hydrolase NudC (257 aa).

Positions 25 and 69 each coordinate substrate. Zn(2+) contacts are provided by Cys-98 and Cys-101. Glu-111 is a binding site for substrate. Residues Cys-116 and Cys-119 each contribute to the Zn(2+) site. Tyr-124 serves as a coordination point for substrate. One can recognise a Nudix hydrolase domain in the interval 125 to 248 (PQIAPCIIVA…TVARRLIEDT (124 aa)). A divalent metal cation-binding residues include Ala-158, Glu-174, and Glu-178. The short motif at 159-180 (GFVEVGETLEQAVAREVMEESG) is the Nudix box element. Substrate is bound at residue 192–199 (QPWPFPQS). Residue Glu-219 participates in a divalent metal cation binding. Ala-241 lines the substrate pocket.

The protein belongs to the Nudix hydrolase family. NudC subfamily. Homodimer. Mg(2+) is required as a cofactor. The cofactor is Mn(2+). Zn(2+) serves as cofactor.

It carries out the reaction a 5'-end NAD(+)-phospho-ribonucleoside in mRNA + H2O = a 5'-end phospho-adenosine-phospho-ribonucleoside in mRNA + beta-nicotinamide D-ribonucleotide + 2 H(+). The catalysed reaction is NAD(+) + H2O = beta-nicotinamide D-ribonucleotide + AMP + 2 H(+). It catalyses the reaction NADH + H2O = reduced beta-nicotinamide D-ribonucleotide + AMP + 2 H(+). Functionally, mRNA decapping enzyme that specifically removes the nicotinamide adenine dinucleotide (NAD) cap from a subset of mRNAs by hydrolyzing the diphosphate linkage to produce nicotinamide mononucleotide (NMN) and 5' monophosphate mRNA. The NAD-cap is present at the 5'-end of some mRNAs and stabilizes RNA against 5'-processing. Has preference for mRNAs with a 5'-end purine. Catalyzes the hydrolysis of a broad range of dinucleotide pyrophosphates. In Escherichia coli O157:H7, this protein is NAD-capped RNA hydrolase NudC.